A 245-amino-acid polypeptide reads, in one-letter code: U11/U12 small nuclear ribonucleoprotein 35 kDa protein (245 aa).

The RRM domain maps to leucine 51–glutamate 129. The segment covering glycine 146–phenylalanine 162 has biased composition (basic and acidic residues). The disordered stretch occupies residues glycine 146–proline 165. Lysine 172 is covalently cross-linked (Glycyl lysine isopeptide (Lys-Gly) (interchain with G-Cter in SUMO2)). The interval asparagine 173–glycine 222 is disordered. Composition is skewed to basic and acidic residues over residues aspartate 174–glutamate 185 and arginine 192–alanine 216.

In terms of assembly, component of the U11/U12 snRNPs that are part of the U12-type spliceosome.

The protein localises to the nucleus. This chain is U11/U12 small nuclear ribonucleoprotein 35 kDa protein (SNRNP35), found in Bos taurus (Bovine).